The following is a 65-amino-acid chain: Small ribosomal subunit protein eS27 (65 aa).

Zn(2+) is bound by residues cysteine 20, cysteine 23, cysteine 39, and cysteine 42. The C4-type zinc finger occupies 20–42; that stretch reads CIDCGNEQIVFSHPATRVRCLVC.

This sequence belongs to the eukaryotic ribosomal protein eS27 family. As to quaternary structure, part of the 30S ribosomal subunit. Requires Zn(2+) as cofactor.

The polypeptide is Small ribosomal subunit protein eS27 (Pyrococcus horikoshii (strain ATCC 700860 / DSM 12428 / JCM 9974 / NBRC 100139 / OT-3)).